Here is a 2024-residue protein sequence, read N- to C-terminus: Pericentriolar material 1 protein (2024 aa).

Residues 1 to 92 are disordered; sequence MATGGGPFED…FPHSRYMSQM (92 aa). An N-acetylalanine modification is found at A2. The mediates interaction with DZIP1 stretch occupies residues 2–1460; sequence ATGGGPFEDG…TWIASNSELT (1459 aa). Residues 43–61 show a composition bias toward basic and acidic residues; it reads RSSEKNKKKFGVESDKRVT. A phosphoserine mark is found at S65, S68, S69, S93, S110, S116, and S119. The segment at 111-163 is disordered; it reads DLDQRSIGSDSQGRATAANNKRQLSENRKPFNFLPMQINTNKSKDASTNPPNR. Composition is skewed to polar residues over residues 116–132 and 147–163; these read SIGS…NNKR and QINT…PPNR. N159 bears the Phosphoserine; in variant Ser-159 mark. A coiled-coil region spans residues 218–301; that stretch reads KASSMREDLV…QLRALQGRQA (84 aa). The segment at 354–392 is disordered; the sequence is RDSQPPAVPDNRRQAESLSLTREVSQSRKPSASERLPDE. Positions 369 to 383 are enriched in polar residues; it reads ESLSLTREVSQSRKP. S370 is modified (phosphoserine). S372 is modified (phosphoserine; by PLK4). S384 carries the phosphoserine modification. An N6-acetyllysine modification is found at K399. A coiled-coil region spans residues 400 to 424; the sequence is MRVLQEKKQKMDKLLGELHTLRDQH. 2 disordered regions span residues 421 to 492 and 523 to 548; these read RDQH…KLQK and ENRK…VTNI. 2 stretches are compositionally biased toward polar residues: residues 425-445 and 456-477; these read LNNS…SAPS and GESN…SQNE. Positions 487–543 form a coiled coil; sequence SEKLQKLNEVRKRLNELRELVHYYEQTSDMMTDAVNENRKDEETEESEYDSEHENSE. At S588 the chain carries Phosphoserine. Disordered regions lie at residues 614 to 652 and 699 to 726; these read HVAQ…HPED and FYPA…DTGV. A compositionally biased stretch (acidic residues) spans 618 to 632; it reads GEDDEEEEEEAEEEG. Low complexity predominate over residues 634 to 643; the sequence is SGASLSSHRS. S643 carries the post-translational modification Phosphoserine. Residues 651 to 682 are a coiled coil; it reads EDAEFEQKINRLMAAKQKLRQLQDLVAMVQDD. Polar residues predominate over residues 708-719; that stretch reads QNSNNTRGNANK. Coiled-coil stretches lie at residues 726-769 and 824-858; these read VNEK…LQTA and SEMR…GLAE. T859 is modified (phosphothreonine). S861, S866, S869, and S872 each carry phosphoserine. Residue T877 is modified to Phosphothreonine. Residues 915-947 are disordered; it reads TDEEEEEEQDASSNDNFSVCPSNSVNHNSYNGK. The segment covering 925–946 has biased composition (polar residues); that stretch reads ASSNDNFSVCPSNSVNHNSYNG. Residues S960, S977, S988, and S991 each carry the phosphoserine modification. Residues 1063 to 1089 are a coiled coil; sequence TQLTWQQNNVQRLKQMLNELMRQQNQH. Disordered regions lie at residues 1085-1109 and 1152-1211; these read QQNQ…PSPS and FSQN…RTPW. The segment covering 1089 to 1099 has biased composition (basic and acidic residues); that stretch reads HPEKPGGKERG. The span at 1152-1173 shows a compositional bias: polar residues; it reads FSQNISTPSEQQQPLAQNSSGK. S1185 and S1188 each carry phosphoserine. Positions 1192–1201 are enriched in basic and acidic residues; it reads EKPRNKKLPE. A phosphoserine mark is found at S1229 and S1231. The span at 1232-1246 shows a compositional bias: polar residues; sequence VEKSTSSNRKNQLDT. Positions 1232–1342 are disordered; it reads VEKSTSSNRK…RHSAQTEEPV (111 aa). 4 positions are modified to phosphoserine: S1257, S1260, S1262, and S1263. The tract at residues 1279 to 1799 is interaction with HAP1; that stretch reads TRKASAQASL…TQALTNYGSG (521 aa). Residues 1296-1313 are compositionally biased toward basic residues; the sequence is KSKSKKRNSTQLKSRVKN. Phosphoserine is present on residues S1318 and S1320. Phosphothreonine is present on T1468. Residues 1515–1539 adopt a coiled-coil conformation; sequence IHLDQALARMREYERMKTEAESNSN. S1573, S1697, S1730, S1765, S1768, S1776, and S1782 each carry phosphoserine. Disordered stretches follow at residues 1725-1868 and 1880-1944; these read LEDH…NNCP and EQPL…PVLV. Over residues 1768–1777 the composition is skewed to acidic residues; it reads SDQEEDEESE. Residues 1783–1797 are compositionally biased toward polar residues; the sequence is INLSKAETQALTNYG. A compositionally biased stretch (acidic residues) spans 1799–1815; that stretch reads GEDENEDEEMEEFEEGP. The segment covering 1818–1827 has biased composition (polar residues); that stretch reads VQTSLQANTE. The segment covering 1835–1860 has biased composition (basic and acidic residues); it reads DEQVLQRDFKKTAESKNVPLEREATS. Positions 1905–1916 are enriched in low complexity; the sequence is PLRLPEMEPLVP. Positions 1913 to 2024 are interaction with BBS4; it reads PLVPRVKEVK…EPETVGAQSI (112 aa). The segment covering 1924–1933 has biased composition (polar residues); that stretch reads AQETPESSLA. Residues S1958 and S1977 each carry the phosphoserine modification. The tract at residues 2005–2024 is disordered; the sequence is ELAGNSETLKEPETVGAQSI.

Belongs to the PCM1 family. Self-associates. Interacts with C2CD3. Interacts with BBS4, BBS8, CETN3, HAP1, NDE1, NDEL1, MAP1LC3B, GABARAPAL2, and GABARAP. Interacts with CEP131; the interaction increases in response to ultraviolet light (UV) radiation. Associates with microtubule; association to microtubule is reduced in response to cellular stress, such as ultraviolet light (UV) radiation or heat shock, in a process that requires p38 MAP kinase signaling. Interacts with CFAP263. Interacts with SSX2IP. Interacts with CCDC13. Interacts with CEP290. Interacts with PARD6A. Interacts with KIAA0753/OFIP, CEP20/FOR20 and OFD1; the interaction with CEP20/FOR20 and OFD1 may be mediated by KIAA0753/OFIP. Interacts with CCDC66. Interacts with CCDC61. Interacts with DZIP1; localizes DZIP1 and the associated BBSome to centriolar satellite. Interacts with CSTPP1, TTLL1, TPGS1 and LRRC49. Interacts with CFAP53. In terms of processing, ubiquitinated. Undergoes monoubiquitination catalyzed by the E3 ubiquitin-protein ligase MIB1 in proliferating cells, preventing cilia formation. Monoubiquitination by MIB1 is inhibited in response to cellular stress, such as ultraviolet light (UV) radiation or heat shock, resulting in cilia formation initiation. Post-translationally, variant Ser-159 is phosphorylated. Phosphorylated on multiple serine and threonine residues by DYRK3 during the G2-to-M transition, after the nuclear-envelope breakdown. Phosphorylation by DYRK3 promotes disassembly of pericentriolar material. Phosphorylation at Ser-372 mediated by PLK4 is required to maintain the integrity of centriolar satellites. In terms of tissue distribution, expressed in blood, bone marrow, breast, lymph node, ovary and thyroid.

The protein resides in the cytoplasm. Its subcellular location is the cytoskeleton. It localises to the microtubule organizing center. It is found in the centrosome. The protein localises to the cytoplasmic granule. The protein resides in the centriolar satellite. Its subcellular location is the cilium basal body. In terms of biological role, required for centrosome assembly and function. Essential for the correct localization of several centrosomal proteins including CEP250, CETN3, PCNT and NEK2. Required to anchor microtubules to the centrosome. Also involved in cilium biogenesis by recruiting the BBSome, a ciliary protein complex involved in cilium biogenesis, to the centriolar satellites. Recruits the tubulin polyglutamylase complex (TPGC) to centriolar satellites. The sequence is that of Pericentriolar material 1 protein from Homo sapiens (Human).